A 267-amino-acid chain; its full sequence is Phosphate import ATP-binding protein PstB (267 aa).

The ABC transporter domain maps to 21-262 (VAARNLDFYY…PSKQQTEDYI (242 aa)). 53 to 60 (GPSGCGKS) is an ATP binding site.

This sequence belongs to the ABC transporter superfamily. Phosphate importer (TC 3.A.1.7) family. As to quaternary structure, the complex is composed of two ATP-binding proteins (PstB), two transmembrane proteins (PstC and PstA) and a solute-binding protein (PstS).

The protein resides in the cell inner membrane. It catalyses the reaction phosphate(out) + ATP + H2O = ADP + 2 phosphate(in) + H(+). Part of the ABC transporter complex PstSACB involved in phosphate import. Responsible for energy coupling to the transport system. This Xanthomonas oryzae pv. oryzae (strain MAFF 311018) protein is Phosphate import ATP-binding protein PstB.